The sequence spans 1388 residues: DNA-directed RNA polymerase subunit beta (1388 aa).

This sequence belongs to the RNA polymerase beta chain family. The RNAP catalytic core consists of 2 alpha, 1 beta, 1 beta' and 1 omega subunit. When a sigma factor is associated with the core the holoenzyme is formed, which can initiate transcription.

The enzyme catalyses RNA(n) + a ribonucleoside 5'-triphosphate = RNA(n+1) + diphosphate. DNA-dependent RNA polymerase catalyzes the transcription of DNA into RNA using the four ribonucleoside triphosphates as substrates. In Xylella fastidiosa (strain Temecula1 / ATCC 700964), this protein is DNA-directed RNA polymerase subunit beta.